The following is a 600-amino-acid chain: Aspartate--tRNA(Asp/Asn) ligase (600 aa).

Glu174 is a binding site for L-aspartate. The segment at 198-201 (QLFK) is aspartate. Arg220 contacts L-aspartate. ATP-binding positions include 220 to 222 (RDE) and Gln229. L-aspartate is bound at residue His457. Residue Glu491 coordinates ATP. Residue Arg498 participates in L-aspartate binding. 543–546 (GLDR) is an ATP binding site.

It belongs to the class-II aminoacyl-tRNA synthetase family. Type 1 subfamily. In terms of assembly, homodimer.

The protein localises to the cytoplasm. It catalyses the reaction tRNA(Asx) + L-aspartate + ATP = L-aspartyl-tRNA(Asx) + AMP + diphosphate. Its function is as follows. Aspartyl-tRNA synthetase with relaxed tRNA specificity since it is able to aspartylate not only its cognate tRNA(Asp) but also tRNA(Asn). Reaction proceeds in two steps: L-aspartate is first activated by ATP to form Asp-AMP and then transferred to the acceptor end of tRNA(Asp/Asn). The chain is Aspartate--tRNA(Asp/Asn) ligase from Burkholderia mallei (strain NCTC 10247).